The following is a 71-amino-acid chain: Protein YqgC (71 aa).

In Escherichia coli (strain K12), this protein is Protein YqgC (yqgC).